A 124-amino-acid chain; its full sequence is Heat-labile enterotoxin B chain (124 aa).

The first 21 residues, 1–21, serve as a signal peptide directing secretion; it reads MNKVKCYVLFTALLSSLCAYG. A disulfide bridge connects residues C30 and C107.

Heterohexamer of one A chain and of five B chains.

Functionally, the biological activity of the toxin is produced by the A chain, which activates intracellular adenyl cyclase. This Escherichia coli O78:H11 (strain H10407 / ETEC) protein is Heat-labile enterotoxin B chain (eltB).